A 113-amino-acid chain; its full sequence is U11-theraphotoxin-Hhn1m (113 aa).

An N-terminal signal peptide occupies residues 1 to 21 (MNTVRGTFLLVFGLAASLGQA). A propeptide spanning residues 22 to 74 (DKNENRREMQKKTEQGKSYLNFAENLLLQKLEELEAKLLEKHSKKSKNSRQKR) is cleaved from the precursor. 3 disulfide bridges follow: cysteine 75/cysteine 90, cysteine 82/cysteine 95, and cysteine 89/cysteine 110.

Belongs to the neurotoxin 14 (magi-1) family. 01 (HNTX-16) subfamily. In terms of tissue distribution, expressed by the venom gland.

The protein resides in the secreted. In terms of biological role, probable ion channel inhibitor. This chain is U11-theraphotoxin-Hhn1m, found in Cyriopagopus hainanus (Chinese bird spider).